The following is a 385-amino-acid chain: Glucans biosynthesis protein C (385 aa).

10 consecutive transmembrane segments (helical) span residues 17 to 37 (AWLM…SHTW), 60 to 80 (MQVF…RYPL), 91 to 111 (VGIP…IMLQ), 137 to 157 (ISHL…VWIF), 173 to 193 (KFSM…YAVI), 212 to 232 (FIVM…LAFI), 239 to 259 (LFTT…VAYL), 274 to 294 (TESV…FSFG), 311 to 331 (ASLF…AYIT), and 338 to 358 (WLGF…LYEI).

Belongs to the acyltransferase 3 family. OpgC subfamily.

The protein resides in the cell membrane. It participates in glycan metabolism; osmoregulated periplasmic glucan (OPG) biosynthesis. Necessary for the succinyl substitution of periplasmic glucans. Could catalyze the transfer of succinyl residues from the cytoplasmic side of the membrane to the nascent glucan backbones on the periplasmic side of the membrane. This Escherichia coli O45:K1 (strain S88 / ExPEC) protein is Glucans biosynthesis protein C.